A 395-amino-acid polypeptide reads, in one-letter code: NAD(P)H-quinone oxidoreductase subunit H, chloroplastic (395 aa).

The protein belongs to the complex I 49 kDa subunit family. In terms of assembly, NDH is composed of at least 16 different subunits, 5 of which are encoded in the nucleus.

The protein resides in the plastid. It is found in the chloroplast thylakoid membrane. It carries out the reaction a plastoquinone + NADH + (n+1) H(+)(in) = a plastoquinol + NAD(+) + n H(+)(out). The catalysed reaction is a plastoquinone + NADPH + (n+1) H(+)(in) = a plastoquinol + NADP(+) + n H(+)(out). Its function is as follows. NDH shuttles electrons from NAD(P)H:plastoquinone, via FMN and iron-sulfur (Fe-S) centers, to quinones in the photosynthetic chain and possibly in a chloroplast respiratory chain. The immediate electron acceptor for the enzyme in this species is believed to be plastoquinone. Couples the redox reaction to proton translocation, and thus conserves the redox energy in a proton gradient. This Dioscorea elephantipes (Elephant's foot yam) protein is NAD(P)H-quinone oxidoreductase subunit H, chloroplastic.